A 347-amino-acid polypeptide reads, in one-letter code: CDK2-associated and cullin domain-containing protein 1 (347 aa).

Positions 1–11 (MEESMEEEEML) are enriched in acidic residues. Disordered stretches follow at residues 1–63 (MEES…LPGG) and 320–347 (RGDQ…RGYR). The span at 34-49 (QPPPAPPLPPPPPPRP) shows a compositional bias: pro residues.

It belongs to the cullin family. In terms of assembly, interacts with CDK2.

In terms of biological role, cell cycle associated protein capable of promoting cell proliferation through the activation of CDK2 at the G1/S phase transition. The protein is CDK2-associated and cullin domain-containing protein 1 (Cacul1) of Rattus norvegicus (Rat).